A 282-amino-acid polypeptide reads, in one-letter code: MASSFLPSGATTGDSGGELSSGDDSGDVESLQSPKIEASRSLPELFEKAAEHLQGLVQVASREQLLYLYARYKQVKVGNCNTPKPSFFDFEGKQKWEAWKALGDSSPSQAMQEYIAVVKKLDPSWNPQSPEKKGKEANTGFGGPVVSSLYHEEIIREEDKDIFDYCRENNIDHITKVIKTKNMDVNMKDEEGRTLLHWACDRGHKELVTVLLQYRADINCQDNEGQTALHYAAACEFLDIVELLLQSGADPTLRDQDGCLPEEVTGCKAVTLMLQQHTTGKA.

Residues 1 to 12 (MASSFLPSGATT) are compositionally biased toward polar residues. The segment at 1 to 34 (MASSFLPSGATTGDSGGELSSGDDSGDVESLQSP) is disordered. Residues 17–31 (GELSSGDDSGDVESL) are compositionally biased toward low complexity. Position 41 is a phosphoserine (serine 41). One can recognise an ACB domain in the interval 42–127 (LPELFEKAAE…VKKLDPSWNP (86 aa)). An acyl-CoA is bound by residues 69–73 (YARYK) and lysine 95. Serine 106 bears the Phosphoserine mark. Tyrosine 114 serves as a coordination point for an acyl-CoA. ANK repeat units lie at residues 191–220 (EGRTLLHWACDRGHKELVTVLLQYRADINC) and 224–253 (EGQTALHYAAACEFLDIVELLLQSGADPTL).

Monomer.

It localises to the cytoplasm. In terms of biological role, binds long-chain acyl-coenzyme A molecules with a strong preference for unsaturated C18:1-CoA, lower affinity for unsaturated C20:4-CoA, and very weak affinity for saturated C16:0-CoA. Does not bind fatty acids. The sequence is that of Acyl-CoA-binding domain-containing protein 6 (ACBD6) from Bos taurus (Bovine).